The following is a 155-amino-acid chain: Ribosomal RNA large subunit methyltransferase H (155 aa).

S-adenosyl-L-methionine contacts are provided by residues L72, G103, and 122–127 (LSPLTL).

The protein belongs to the RNA methyltransferase RlmH family. As to quaternary structure, homodimer.

The protein localises to the cytoplasm. The catalysed reaction is pseudouridine(1915) in 23S rRNA + S-adenosyl-L-methionine = N(3)-methylpseudouridine(1915) in 23S rRNA + S-adenosyl-L-homocysteine + H(+). Its function is as follows. Specifically methylates the pseudouridine at position 1915 (m3Psi1915) in 23S rRNA. This chain is Ribosomal RNA large subunit methyltransferase H, found in Mannheimia succiniciproducens (strain KCTC 0769BP / MBEL55E).